A 548-amino-acid chain; its full sequence is Sesquiterpene synthase TPS1 (548 aa).

(2E,6E)-farnesyl diphosphate contacts are provided by R264, D301, D305, R442, and D445. Mg(2+) is bound by residues D301 and D305. The short motif at 301 to 305 is the DDXXD motif element; sequence DDTYD. The Mg(2+) site is built by D445 and E453.

The protein belongs to the terpene synthase family. Tpsa subfamily. As to quaternary structure, monomer. It depends on Mg(2+) as a cofactor. Expressed in leaves and stems.

The protein resides in the cytoplasm. The enzyme catalyses (2E,6E)-farnesyl diphosphate = germacrene D + diphosphate. The catalysed reaction is (2E,6E)-farnesyl diphosphate = (-)-(E)-beta-caryophyllene + diphosphate. It catalyses the reaction (2E,6E)-farnesyl diphosphate = beta-copaene + diphosphate. It participates in secondary metabolite biosynthesis; terpenoid biosynthesis. In terms of biological role, sesquiterpene synthase involved in the biosynthesis of volatile compounds. Mediates the conversion of (2E,6E)-farnesyl diphosphate (FPP) into germacrene D, (-)-(E)-beta-caryophyllene and beta-copaene. The polypeptide is Sesquiterpene synthase TPS1 (Xanthium strumarium (Rough cocklebur)).